The following is a 105-amino-acid chain: Secreted effector protein PINE1 (105 aa).

The signal sequence occupies residues 1-21 (MKLSQPLSIFAILAASTVAVA).

In terms of assembly, interacts with Arabidopsis thaliana PGIP1.

Its subcellular location is the secreted. Its function is as follows. Effector protein required for full virulence. Directly interacts with and functionally inactivates PG-inhibiting proteins (PGIPs). PGIPs are a defense mechanism of infected plants, that inhibit the plant pathogens secreted polygalacturonases (PGs) used to degrade the plant cell wall. Excerts its function by interacting with host PGIPs to negate their polygalacturonase-inhibiting function via enhanced dissociation of PGIPs from PGs. This Sclerotinia sclerotiorum (strain ATCC 18683 / 1980 / Ss-1) (White mold) protein is Secreted effector protein PINE1.